The sequence spans 205 residues: COP9 signalosome complex subunit 7 (205 aa).

The PCI domain occupies 1–135 (MEEKISQAID…QTLHVSWALE (135 aa)). A Phosphoserine modification is found at Ser183.

Belongs to the CSN7/EIF3M family. CSN7 subfamily. As to quaternary structure, component of the COP9 signalosome (CSN) complex.

Functionally, component of the COP9 signalosome (CSN) complex that acts as an regulator of the ubiquitin (Ubl) conjugation pathway by mediating the deneddylation of the cullin subunit of SCF-type E3 ubiquitin-protein ligase complexes. The chain is COP9 signalosome complex subunit 7 (csn71) from Schizosaccharomyces pombe (strain 972 / ATCC 24843) (Fission yeast).